The sequence spans 191 residues: Adenylate kinase (191 aa).

12-17 serves as a coordination point for ATP; sequence GSGKTT. Residues 34–63 form an NMP region; that stretch reads STGDLLRAESAKKTERGLLIEKFTSQGELV. AMP is bound by residues threonine 35, arginine 40, 61–63, 88–91, and glutamine 95; these read ELV and GYPR. Residues 130 to 136 form an LID region; that stretch reads GRSRGAD. Arginine 131 is a binding site for ATP. Arginine 133 and arginine 145 together coordinate AMP. Residue arginine 173 coordinates ATP.

This sequence belongs to the adenylate kinase family. As to quaternary structure, monomer.

It localises to the cytoplasm. It catalyses the reaction AMP + ATP = 2 ADP. The protein operates within purine metabolism; AMP biosynthesis via salvage pathway; AMP from ADP: step 1/1. Catalyzes the reversible transfer of the terminal phosphate group between ATP and AMP. Plays an important role in cellular energy homeostasis and in adenine nucleotide metabolism. The sequence is that of Adenylate kinase from Helicobacter pylori (strain G27).